The following is a 314-amino-acid chain: Ribosomal RNA small subunit methyltransferase H (314 aa).

S-adenosyl-L-methionine is bound by residues 36–38 (GGH), Asp-56, Phe-83, Asp-104, and Gln-111.

Belongs to the methyltransferase superfamily. RsmH family.

Its subcellular location is the cytoplasm. The enzyme catalyses cytidine(1402) in 16S rRNA + S-adenosyl-L-methionine = N(4)-methylcytidine(1402) in 16S rRNA + S-adenosyl-L-homocysteine + H(+). In terms of biological role, specifically methylates the N4 position of cytidine in position 1402 (C1402) of 16S rRNA. The polypeptide is Ribosomal RNA small subunit methyltransferase H (Syntrophotalea carbinolica (strain DSM 2380 / NBRC 103641 / GraBd1) (Pelobacter carbinolicus)).